Here is a 778-residue protein sequence, read N- to C-terminus: Endonuclease MutS2 (778 aa).

An ATP-binding site is contributed by 329-336 (GPNTGGKT). Positions 703 to 778 (LDLRGKRYEE…GSGCTIVTFK (76 aa)) constitute a Smr domain.

The protein belongs to the DNA mismatch repair MutS family. MutS2 subfamily. Homodimer. Binds to stalled ribosomes, contacting rRNA.

Endonuclease that is involved in the suppression of homologous recombination and thus may have a key role in the control of bacterial genetic diversity. In terms of biological role, acts as a ribosome collision sensor, splitting the ribosome into its 2 subunits. Detects stalled/collided 70S ribosomes which it binds and splits by an ATP-hydrolysis driven conformational change. Acts upstream of the ribosome quality control system (RQC), a ribosome-associated complex that mediates the extraction of incompletely synthesized nascent chains from stalled ribosomes and their subsequent degradation. Probably generates substrates for RQC. The polypeptide is Endonuclease MutS2 (Streptococcus suis (strain 98HAH33)).